Consider the following 78-residue polypeptide: Large ribosomal subunit protein eL38 (78 aa).

The protein belongs to the eukaryotic ribosomal protein eL38 family. As to quaternary structure, component of the large ribosomal subunit (LSU). Mature yeast ribosomes consist of a small (40S) and a large (60S) subunit. The 40S small subunit contains 1 molecule of ribosomal RNA (18S rRNA) and 33 different proteins (encoded by 57 genes). The large 60S subunit contains 3 rRNA molecules (25S, 5.8S and 5S rRNA) and 46 different proteins (encoded by 81 genes).

The protein resides in the cytoplasm. Its function is as follows. Component of the ribosome, a large ribonucleoprotein complex responsible for the synthesis of proteins in the cell. The small ribosomal subunit (SSU) binds messenger RNAs (mRNAs) and translates the encoded message by selecting cognate aminoacyl-transfer RNA (tRNA) molecules. The large subunit (LSU) contains the ribosomal catalytic site termed the peptidyl transferase center (PTC), which catalyzes the formation of peptide bonds, thereby polymerizing the amino acids delivered by tRNAs into a polypeptide chain. The nascent polypeptides leave the ribosome through a tunnel in the LSU and interact with protein factors that function in enzymatic processing, targeting, and the membrane insertion of nascent chains at the exit of the ribosomal tunnel. This Saccharomyces cerevisiae (strain ATCC 204508 / S288c) (Baker's yeast) protein is Large ribosomal subunit protein eL38.